A 127-amino-acid chain; its full sequence is Small ribosomal subunit protein bS16 (127 aa).

Positions 80–127 (GLKKRPTRNNPHKGEPGKKAQERIAAAKQAAEEAAAAKTESAPISEEV) are disordered. A compositionally biased stretch (basic residues) spans 81-90 (LKKRPTRNNP). The span at 91 to 101 (HKGEPGKKAQE) shows a compositional bias: basic and acidic residues. Low complexity predominate over residues 102-121 (RIAAAKQAAEEAAAAKTESA).

Belongs to the bacterial ribosomal protein bS16 family.

This Bartonella henselae (strain ATCC 49882 / DSM 28221 / CCUG 30454 / Houston 1) (Rochalimaea henselae) protein is Small ribosomal subunit protein bS16.